A 285-amino-acid chain; its full sequence is MIRKLTLTAATALALSGGAAMAAGGGHVEDVPFSFEGPFGTFDQHQLQRGLQVYTEVCAACHGMKFVPIRSLSEPGGPELPEDQVRAYATQFTVTDEETGEDREGKPTDHFPHSALENAADLSLMAKARAGFHGPMGTGISQLFNGIGGPEYIYSVLTGFPEEPPKCAEGHEPDGFYYNRAFQNGSVPDTCKDANGVKTTAGSWIAMPPPLMDDLVEYADGHDASVHAMAEDVSAFLMWAAEPKLMARKQAGFTAVMFLTVLSVLLYLTNKRLWAGVKGKKKTNV.

Residues 1–22 (MIRKLTLTAATALALSGGAAMA) form the signal peptide. 4 residues coordinate heme c: C58, C61, H62, and M207. A helical transmembrane segment spans residues 251-269 (AGFTAVMFLTVLSVLLYLT).

In terms of assembly, the main subunits of complex b-c1 are: cytochrome b, cytochrome c1 and the Rieske protein. Binds 1 heme c group covalently per subunit.

Its subcellular location is the cell membrane. Functionally, component of the ubiquinol-cytochrome c reductase complex (complex III or cytochrome b-c1 complex), which is a respiratory chain that generates an electrochemical potential coupled to ATP synthesis. c1 functions as an electron donor to cytochrome c. The polypeptide is Cytochrome c1 (petC) (Cereibacter sphaeroides (Rhodobacter sphaeroides)).